The following is a 132-amino-acid chain: Agouti-signaling protein (132 aa).

Residues 1 to 22 (MDVTRLLLATLLVFLCFFTAYS) form the signal peptide. N-linked (GlcNAc...) asparagine glycosylation is present at N39. Residues 62-88 (ISRKEAEKKRSSKKEASMKKVARPRTP) are disordered. Basic and acidic residues predominate over residues 63-79 (SRKEAEKKRSSKKEASM). Cystine bridges form between C93–C108, C100–C114, C107–C125, C111–C132, and C116–C123. An Agouti domain is found at 93–132 (CVATRDSCKPPAPACCDPCASCQCRFFRSACSCRVLSLNC).

Its subcellular location is the secreted. Involved in the regulation of melanogenesis. The binding of ASP to MC1R precludes alpha-MSH initiated signaling and thus blocks production of cAMP, leading to a down-regulation of eumelanogenesis (brown/black pigment) and thus increasing synthesis of pheomelanin (yellow/red pigment). In Macaca radiata (Bonnet macaque), this protein is Agouti-signaling protein (ASIP).